A 203-amino-acid chain; its full sequence is Glutathione S-transferase (203 aa).

In terms of domain architecture, GST N-terminal spans 2–79; it reads PDYKVYYFNV…YLANQVGLAG (78 aa). Residues Tyr8, Trp39, Lys43, 49-51, and 63-64 contribute to the glutathione site; these read GQM and QS. In terms of domain architecture, GST C-terminal spans 81–203; that stretch reads DDWENLMIDT…YIAKRPITEV (123 aa).

Belongs to the GST superfamily. Sigma family. Homodimer.

It carries out the reaction RX + glutathione = an S-substituted glutathione + a halide anion + H(+). In terms of biological role, conjugation of reduced glutathione to a wide number of exogenous and endogenous hydrophobic electrophiles. This chain is Glutathione S-transferase (GstS1), found in Anopheles gambiae (African malaria mosquito).